A 100-amino-acid chain; its full sequence is CCAAT/enhancer-binding protein homolog 2 (100 aa).

Disordered stretches follow at residues methionine 1 to glutamate 60 and alanine 79 to valine 100. Residues glutamate 17–tyrosine 80 enclose the bZIP domain. A basic motif region spans residues lysine 23 to lysine 48. A coiled-coil region spans residues arginine 24–asparagine 83. Residues arginine 39–glutamate 60 are compositionally biased toward basic and acidic residues. The tract at residues leucine 52–leucine 73 is leucine-zipper. Over residues glycine 88–valine 100 the composition is skewed to pro residues.

The protein belongs to the bZIP family. C/EBP subfamily. Interacts with transcription factor zip-11. In terms of tissue distribution, expressed broadly in somatic tissues including the intestine.

Its subcellular location is the nucleus. Transcription factor that binds to the promoter and the enhancer regions of target genes. Regulates expression of genes involved in fat metabolism, including ech-1.1 and fat-5. Has a protective role in response to infection by the Gram-negative bacterium P.aeruginosa. Required for the activation of infection response gene irg-1 following P.aeruginosa infection. Required to prevent P.aeruginosa ToxA-mediated lethality. May also function in concert with transcription factor zip-11 to mediate immune responses, independently of the pmk-1/p38 MAPK pathway. May act together with the bZIP transcription factor, zip-2. The polypeptide is CCAAT/enhancer-binding protein homolog 2 (Caenorhabditis elegans).